Here is a 114-residue protein sequence, read N- to C-terminus: MNLITLIIMAMAMTTALYTINTYTTMKPDINKLSPYECGFDPLGNARTPISIQFFLVAILFILFDLEIVLLLPTPWSMNTNPSNTTILLITMLLTILTLGLLYEWLQGGLEWTE.

The next 3 membrane-spanning stretches (helical) occupy residues 3 to 23 (LITL…INTY), 52 to 72 (IQFF…VLLL), and 86 to 106 (TILL…YEWL).

Belongs to the complex I subunit 3 family.

The protein resides in the mitochondrion membrane. It catalyses the reaction a ubiquinone + NADH + 5 H(+)(in) = a ubiquinol + NAD(+) + 4 H(+)(out). Functionally, core subunit of the mitochondrial membrane respiratory chain NADH dehydrogenase (Complex I) that is believed to belong to the minimal assembly required for catalysis. Complex I functions in the transfer of electrons from NADH to the respiratory chain. The immediate electron acceptor for the enzyme is believed to be ubiquinone. The polypeptide is NADH-ubiquinone oxidoreductase chain 3 (MT-ND3) (Lycodon semicarinatus (Ryukyu odd-tooth snake)).